Here is a 318-residue protein sequence, read N- to C-terminus: Protein LplB (318 aa).

6 helical membrane passes run 35–55 (LIPG…GVLI), 94–114 (LMLA…LALL), 130–150 (FIYV…FVFF), 182–202 (IVMQ…LAAL), 236–256 (IIVL…EQVY), and 289–309 (AVGL…NYIA). The ABC transmembrane type-1 domain maps to 90–305 (LRNTLMLASL…VVGIILIFGA (216 aa)).

The protein belongs to the binding-protein-dependent transport system permease family. MalFG subfamily.

Its subcellular location is the cell membrane. This Bacillus subtilis (strain 168) protein is Protein LplB (lplB).